The sequence spans 84 residues: Hepcidin (84 aa).

Residues 1 to 24 (MALSSQIWAACLLLLLLLASLTSG) form the signal peptide. Residues 25-54 (SVFPQQTGQLAELQPQDRAGARAGWTPMLQ) constitute a propeptide that is removed on maturation. Disulfide bonds link C69–C72, C70–C78, and C73–C81.

It belongs to the hepcidin family. Interacts with SLC40A1; this interaction promotes SLC40A1 rapid ubiquitination.

It localises to the secreted. Functionally, liver-produced hormone that constitutes the main circulating regulator of iron absorption and distribution across tissues. Acts by promoting endocytosis and degradation of ferroportin/SLC40A1, leading to the retention of iron in iron-exporting cells and decreased flow of iron into plasma. Controls the major flows of iron into plasma: absorption of dietary iron in the intestine, recycling of iron by macrophages, which phagocytose old erythrocytes and other cells, and mobilization of stored iron from hepatocytes. Its function is as follows. Has strong antimicrobial activity against E.coli ML35P N.cinerea and weaker against S.epidermidis, S.aureus and group b streptococcus bacteria. Active against the fungus C.albicans. No activity against P.aeruginosa. This Pongo abelii (Sumatran orangutan) protein is Hepcidin (HAMP).